Reading from the N-terminus, the 306-residue chain is Phospho-N-acetylmuramoyl-pentapeptide-transferase (306 aa).

The next 10 helical transmembrane spans lie at 1 to 21 (MDIY…IIFP), 49 to 69 (GTPT…GLIL), 75 to 95 (LIFT…VSIV), 104 to 124 (AWQK…TILQ), 130 to 150 (IFGI…LVSG), 160 to 180 (GIDG…MFFS), 182 to 202 (SSME…FLVY), 209 to 229 (VFMG…YALM), 234 to 254 (LSLL…ILQV), and 284 to 304 (IVGV…AFFL).

This sequence belongs to the glycosyltransferase 4 family. MraY subfamily. It depends on Mg(2+) as a cofactor.

The protein resides in the cell inner membrane. It catalyses the reaction UDP-N-acetyl-alpha-D-muramoyl-L-alanyl-gamma-D-glutamyl-meso-2,6-diaminopimeloyl-D-alanyl-D-alanine + di-trans,octa-cis-undecaprenyl phosphate = di-trans,octa-cis-undecaprenyl diphospho-N-acetyl-alpha-D-muramoyl-L-alanyl-D-glutamyl-meso-2,6-diaminopimeloyl-D-alanyl-D-alanine + UMP. The protein operates within cell wall biogenesis; peptidoglycan biosynthesis. Functionally, catalyzes the initial step of the lipid cycle reactions in the biosynthesis of the cell wall peptidoglycan: transfers peptidoglycan precursor phospho-MurNAc-pentapeptide from UDP-MurNAc-pentapeptide onto the lipid carrier undecaprenyl phosphate, yielding undecaprenyl-pyrophosphoryl-MurNAc-pentapeptide, known as lipid I. The sequence is that of Phospho-N-acetylmuramoyl-pentapeptide-transferase from Fervidobacterium nodosum (strain ATCC 35602 / DSM 5306 / Rt17-B1).